A 119-amino-acid chain; its full sequence is Probable prefoldin subunit 6 (119 aa).

Belongs to the prefoldin subunit beta family. Heterohexamer of two PFD-alpha type and four PFD-beta type subunits. May interact with MSP1.

Functionally, binds specifically to cytosolic chaperonin (c-CPN) and transfers target proteins to it. Binds to nascent polypeptide chain and promotes folding in an environment in which there are many competing pathways for nonnative proteins. The chain is Probable prefoldin subunit 6 from Plasmodium falciparum (isolate 3D7).